A 246-amino-acid chain; its full sequence is Sortase B (246 aa).

Residues 5 to 24 (SFLGKSLTLVVLGVFLFSGW) traverse the membrane as a helical segment.

It belongs to the bacterial sortase family. Class B subfamily.

The protein resides in the cell membrane. Transpeptidase that anchors surface proteins to the cell wall. Recognizes and modifies its substrate by proteolytic cleavage of a C-terminal sorting signal. Following cleavage, a covalent intermediate is formed via a thioester bond between the sortase and its substrate, which is then transferred and covalently attached to the cell wall. Catalyzes a cell wall sorting reaction in which a surface protein with the consensus sorting signal NP(Q/K)(T/S)(N/G/S)(D/A) is cleaved between the fourth and fifth residues, and the fourth position is linked to the cell wall. This is not the major sortase in Listeria, it seems to anchor only 2 proteins, Hbp2 (SvpA) and Hbp1. This is Sortase B from Listeria monocytogenes serovar 1/2a (strain ATCC BAA-679 / EGD-e).